The chain runs to 132 residues: Fatty acid-binding protein 9 (132 aa).

4 positions are modified to phosphoserine: serine 13, serine 14, serine 44, and serine 91.

The protein belongs to the calycin superfamily. Fatty-acid binding protein (FABP) family.

The protein resides in the cytoplasm. The chain is Fatty acid-binding protein 9 (FABP9) from Homo sapiens (Human).